The following is a 63-amino-acid chain: Cytochrome c oxidase subunit 7C, mitochondrial (63 aa).

A mitochondrion-targeting transit peptide spans Met1–Arg16. Topologically, residues Ser17–Asn33 are mitochondrial matrix. Lys25 carries the post-translational modification N6-acetyllysine; alternate. Lys25 is subject to N6-succinyllysine; alternate. A helical membrane pass occupies residues Lys34–Leu60. The Mitochondrial intermembrane portion of the chain corresponds to Leu61–Lys63.

It belongs to the cytochrome c oxidase VIIc family. As to quaternary structure, component of the cytochrome c oxidase (complex IV, CIV), a multisubunit enzyme composed of 14 subunits. The complex is composed of a catalytic core of 3 subunits MT-CO1, MT-CO2 and MT-CO3, encoded in the mitochondrial DNA, and 11 supernumerary subunits COX4I, COX5A, COX5B, COX6A, COX6B, COX6C, COX7A, COX7B, COX7C, COX8 and NDUFA4, which are encoded in the nuclear genome. The complex exists as a monomer or a dimer and forms supercomplexes (SCs) in the inner mitochondrial membrane with NADH-ubiquinone oxidoreductase (complex I, CI) and ubiquinol-cytochrome c oxidoreductase (cytochrome b-c1 complex, complex III, CIII), resulting in different assemblies (supercomplex SCI(1)III(2)IV(1) and megacomplex MCI(2)III(2)IV(2)). Interacts with RAB5IF.

It is found in the mitochondrion inner membrane. The protein operates within energy metabolism; oxidative phosphorylation. Component of the cytochrome c oxidase, the last enzyme in the mitochondrial electron transport chain which drives oxidative phosphorylation. The respiratory chain contains 3 multisubunit complexes succinate dehydrogenase (complex II, CII), ubiquinol-cytochrome c oxidoreductase (cytochrome b-c1 complex, complex III, CIII) and cytochrome c oxidase (complex IV, CIV), that cooperate to transfer electrons derived from NADH and succinate to molecular oxygen, creating an electrochemical gradient over the inner membrane that drives transmembrane transport and the ATP synthase. Cytochrome c oxidase is the component of the respiratory chain that catalyzes the reduction of oxygen to water. Electrons originating from reduced cytochrome c in the intermembrane space (IMS) are transferred via the dinuclear copper A center (CU(A)) of subunit 2 and heme A of subunit 1 to the active site in subunit 1, a binuclear center (BNC) formed by heme A3 and copper B (CU(B)). The BNC reduces molecular oxygen to 2 water molecules using 4 electrons from cytochrome c in the IMS and 4 protons from the mitochondrial matrix. In Rattus norvegicus (Rat), this protein is Cytochrome c oxidase subunit 7C, mitochondrial (Cox7c).